Reading from the N-terminus, the 179-residue chain is O-acetyl-ADP-ribose deacetylase (179 aa).

The Macro domain maps to 1–175; that stretch reads MTSRLQVIQG…LYARLLTQQG (175 aa). Substrate-binding positions include 11-12, asparagine 25, 33-35, and 122-126; these read DI, GVD, and STGVY. Aspartate 35 (proton acceptor) is an active-site residue.

This sequence belongs to the MacroD-type family. YmdB subfamily. As to quaternary structure, homodimer. Interacts with RNase III.

It catalyses the reaction 3''-O-acetyl-ADP-D-ribose + H2O = ADP-D-ribose + acetate + H(+). The catalysed reaction is 2''-O-acetyl-ADP-D-ribose + H2O = ADP-D-ribose + acetate + H(+). Its function is as follows. Deacetylates O-acetyl-ADP ribose to yield ADP-ribose and free acetate. Down-regulates ribonuclease 3 (RNase III) activity. Acts by interacting directly with the region of the ribonuclease that is required for dimerization/activation. This chain is O-acetyl-ADP-ribose deacetylase, found in Salmonella newport (strain SL254).